Consider the following 64-residue polypeptide: Large ribosomal subunit protein bL33 (64 aa).

It belongs to the bacterial ribosomal protein bL33 family.

This Crocosphaera subtropica (strain ATCC 51142 / BH68) (Cyanothece sp. (strain ATCC 51142)) protein is Large ribosomal subunit protein bL33.